The chain runs to 170 residues: Vimentin A1 (170 aa).

The span at 1-10 shows a compositional bias: polar residues; the sequence is DLTEAANKSN. A disordered region spans residues 1–20; that stretch reads DLTEAANKSNEALRLAKQES. Residues 1 to 111 form a coil 2 region; it reads DLTEAANKSN…ATYRKLLEGE (111 aa). Positions 1–115 constitute an IF rod domain; that stretch reads DLTEAANKSN…KLLEGEESRI (115 aa). Residues 112 to 170 form a tail region; it reads ESRISTPLPNFSSFNLRETMLELKPNIESTFTKKVLIKTIETRDGQVLNESTQNHDDLE.

Belongs to the intermediate filament family. In terms of assembly, homomer. One of the most prominent phosphoproteins in various cells of mesenchymal origin. Phosphorylation is enhanced during cell division, at which time vimentin filaments are significantly reorganized. As to expression, expressed in low amounts in retina, optic nerve, and brain and in higher amounts in spinal cord.

Functionally, vimentins are class-III intermediate filaments found in various non-epithelial cells, especially mesenchymal cells. Vimentin is attached to the nucleus, endoplasmic reticulum, and mitochondria, either laterally or terminally. The polypeptide is Vimentin A1 (Carassius auratus (Goldfish)).